Consider the following 267-residue polypeptide: NAD kinase 2 (267 aa).

Asp-52 serves as the catalytic Proton acceptor. NAD(+) is bound by residues 52–53, 124–125, Arg-151, Asp-153, 164–169, and Ala-188; these read DG, NE, and TAYNKS.

It belongs to the NAD kinase family. A divalent metal cation is required as a cofactor.

It localises to the cytoplasm. It carries out the reaction NAD(+) + ATP = ADP + NADP(+) + H(+). Involved in the regulation of the intracellular balance of NAD and NADP, and is a key enzyme in the biosynthesis of NADP. Catalyzes specifically the phosphorylation on 2'-hydroxyl of the adenosine moiety of NAD to yield NADP. This is NAD kinase 2 from Bacillus subtilis (strain 168).